Reading from the N-terminus, the 787-residue chain is Lysine-specific demethylase JMJ13 (787 aa).

One can recognise a JmjN domain in the interval 103–144 (CPVYRPTKEEFEDPLTYLQKIFPEASKYGICKIVSPLTATVP). Residues 250–420 (SSKWNLNKVS…FGAIASCRYA (171 aa)) form the JmjC domain. 3 residues coordinate Fe cation: H293, E295, and H388. C500, C503, C514, C516, H519, C522, H525, and C534 together coordinate Zn(2+). The C4HCHC zinc finger occupies 500 to 551 (CSLCKRDCYLAFINCECYSHPVCLRHDVKKLDLPCGTTHTLYLRDNIEDMEA). A C5HC2 zinc finger spans residues 500–551 (CSLCKRDCYLAFINCECYSHPVCLRHDVKKLDLPCGTTHTLYLRDNIEDMEA). Residues 617 to 675 (VMSYEANASCISSVADDYECSDYVNRRANCSSSSDSKLSEEVACSSSKKTRFFPVVQDE) enclose the FYR N-terminal domain. Positions 677 to 756 (LVADQESDGS…ELVISNRKET (80 aa)) constitute an FYR C-terminal domain. Residues 712-769 (ESDHHQELKRLKKSHHHEGRYSSSSSVSRQEEEEDELVISNRKETQQQSDVKMQKKRI) are disordered. Positions 752-759 (NRKETQQQ) match the Nuclear localization signal motif.

Belongs to the JARID1 histone demethylase family. Fe(2+) serves as cofactor. Mostly expressed in leaves, and, to a lower extent, in inflorescences, roots, siliques and stems.

The protein resides in the nucleus. It catalyses the reaction N(6),N(6),N(6)-trimethyl-L-lysyl(27)-[histone H3] + 2-oxoglutarate + O2 = N(6),N(6)-dimethyl-L-lysyl(27)-[histone H3] + formaldehyde + succinate + CO2. Its function is as follows. Histone demethylase that demethylates 'Lys-27' (H3K27me) of histone H3 with a specific activity for H3K27me3 and involved in the regulation of gene expression. Acts as a temperature and photoperiod dependent flowering repressor. The protein is Lysine-specific demethylase JMJ13 of Arabidopsis thaliana (Mouse-ear cress).